Reading from the N-terminus, the 293-residue chain is NAD kinase (293 aa).

Catalysis depends on Asp-73, which acts as the Proton acceptor. Residues 73 to 74, 147 to 148, Arg-175, Asp-177, and 188 to 193 each bind NAD(+); these read DG, NE, and TAYSMS.

It belongs to the NAD kinase family. A divalent metal cation serves as cofactor.

Its subcellular location is the cytoplasm. The catalysed reaction is NAD(+) + ATP = ADP + NADP(+) + H(+). Functionally, involved in the regulation of the intracellular balance of NAD and NADP, and is a key enzyme in the biosynthesis of NADP. Catalyzes specifically the phosphorylation on 2'-hydroxyl of the adenosine moiety of NAD to yield NADP. This is NAD kinase from Colwellia psychrerythraea (strain 34H / ATCC BAA-681) (Vibrio psychroerythus).